The primary structure comprises 482 residues: Bifunctional protein HldE (482 aa).

The tract at residues 1–322 (MFGLESKSPK…QYIHTQPSNL (322 aa)) is ribokinase. 198–201 (NKKE) serves as a coordination point for ATP. The active site involves Asp267. Residues 350–482 (FTNGCFDILH…IQRSKICKHS (133 aa)) form a cytidylyltransferase region.

In the N-terminal section; belongs to the carbohydrate kinase PfkB family. It in the C-terminal section; belongs to the cytidylyltransferase family. In terms of assembly, homodimer.

The catalysed reaction is D-glycero-beta-D-manno-heptose 7-phosphate + ATP = D-glycero-beta-D-manno-heptose 1,7-bisphosphate + ADP + H(+). It carries out the reaction D-glycero-beta-D-manno-heptose 1-phosphate + ATP + H(+) = ADP-D-glycero-beta-D-manno-heptose + diphosphate. It participates in nucleotide-sugar biosynthesis; ADP-L-glycero-beta-D-manno-heptose biosynthesis; ADP-L-glycero-beta-D-manno-heptose from D-glycero-beta-D-manno-heptose 7-phosphate: step 1/4. Its pathway is nucleotide-sugar biosynthesis; ADP-L-glycero-beta-D-manno-heptose biosynthesis; ADP-L-glycero-beta-D-manno-heptose from D-glycero-beta-D-manno-heptose 7-phosphate: step 3/4. It functions in the pathway bacterial outer membrane biogenesis; LPS core biosynthesis. Its function is as follows. Catalyzes the phosphorylation of D-glycero-D-manno-heptose 7-phosphate at the C-1 position to selectively form D-glycero-beta-D-manno-heptose-1,7-bisphosphate. Catalyzes the ADP transfer from ATP to D-glycero-beta-D-manno-heptose 1-phosphate, yielding ADP-D-glycero-beta-D-manno-heptose. The protein is Bifunctional protein HldE of Helicobacter hepaticus (strain ATCC 51449 / 3B1).